Consider the following 129-residue polypeptide: MKCTLRWTITALVLLGICHLARPAYHKKCGRYSYCWIPYDIERDRRDNGGKKCCFCRNAWSPWQCKEDERYEWLRCGHKFYYMCCYTDDDNGNGDGNGNGFNYLKSLYGGYGNGNGEFWEEYIDERYDK.

The first 23 residues, 1–23 (MKCTLRWTITALVLLGICHLARP), serve as a signal peptide directing secretion. 5 repeat units span residues 91-92 (NG), 93-94 (NG), 95-96 (DG), 97-98 (NG), and 99-100 (NG). Residues 91-100 (NGNGDGNGNG) are 5 X 2 AA tandem repeats of N-G.

The protein belongs to the N16 matrix protein family. In terms of assembly, heterooligomer; disulfide-linked. Pif97, Pif80, N16 and other proteins form a complex. As to expression, component of conchiolin, the organic matrix of nacre. Expressed at extremely high levels in the dorsal region of the mantle, which region may be responsible for the nacreous layer formation, but only in trace amounts at the mantle edge, which region may be responsible for the prismatic layer formation.

It localises to the secreted. The protein resides in the extracellular space. The protein localises to the extracellular matrix. Its function is as follows. May be specifically involved in the formation of the nacreous layer. The protein is N16.2 matrix protein of Pinctada fucata (Akoya pearl oyster).